The chain runs to 382 residues: uncharacterized protein (382 aa).

The next 12 membrane-spanning stretches (helical) occupy residues 8-28 (VLLL…LNTL), 39-61 (PTWQ…TLLT), 75-95 (YLAS…VGFW), 102-122 (FIAG…LMCS), 131-151 (LLAA…LMIS), 157-177 (LMSV…PLLF), 204-224 (LGVN…GLMP), 236-256 (GIGF…WPIG), 265-284 (LLVL…AMLG), 289-311 (APAL…AWAC), 325-345 (ALLL…AMLM), and 349-369 (SDNL…LMLL).

The protein belongs to the major facilitator superfamily. YcaD (TC 2.A.1.26) family.

It is found in the cell inner membrane. This is an uncharacterized protein from Enterobacter sp. (strain 638).